A 443-amino-acid polypeptide reads, in one-letter code: Nitrate/nitrite binding protein NrtA (443 aa).

The N-terminal stretch at 1-25 (MSQFSRRKFLLTAGGTAAAALWLNA) is a signal peptide. A lipid anchor (N-palmitoyl cysteine) is attached at C26. Residue C26 is the site of S-diacylglycerol cysteine attachment. Over residues 31–46 (SSTDTTGSTSTPAPSG) the composition is skewed to low complexity. Residues 31 to 52 (SSTDTTGSTSTPAPSGTSGGDA) form a disordered region. 5 residues coordinate nitrate: W96, Q150, H195, G239, and K268.

This sequence belongs to the CmpA/NrtA family. As to quaternary structure, the complex is composed of two ATP-binding proteins (NrtC and NrtD), two transmembrane proteins (NrtB) and a solute-binding protein (NrtA). NrtA can form homotrimers. In terms of processing, the N-terminus is blocked.

It is found in the cell inner membrane. In terms of biological role, part of the ABC transporter complex NrtABCD involved in nitrate uptake. The complex is probably also involved in nitrite transport. NrtA is the substrate-binding protein. Binds both nitrate and nitrite with high affinity. The polypeptide is Nitrate/nitrite binding protein NrtA (Synechococcus elongatus (strain ATCC 33912 / PCC 7942 / FACHB-805) (Anacystis nidulans R2)).